A 264-amino-acid polypeptide reads, in one-letter code: Glutamate racemase 2 (264 aa).

Residues 10–11 and 42–43 contribute to the substrate site; these read DS and YG. C73 serves as the catalytic Proton donor/acceptor. Residue 74–75 participates in substrate binding; that stretch reads NT. The active-site Proton donor/acceptor is the C181. 182 to 183 contacts substrate; it reads TH.

The protein belongs to the aspartate/glutamate racemases family.

It carries out the reaction L-glutamate = D-glutamate. The protein operates within cell wall biogenesis; peptidoglycan biosynthesis. Functionally, provides the (R)-glutamate required for cell wall biosynthesis. This chain is Glutamate racemase 2, found in Caldanaerobacter subterraneus subsp. tengcongensis (strain DSM 15242 / JCM 11007 / NBRC 100824 / MB4) (Thermoanaerobacter tengcongensis).